A 249-amino-acid chain; its full sequence is UPF0524 protein C3orf70 homolog B (249 aa).

The disordered stretch occupies residues 174–230 (GPKMGHCSSPSTSEDSGINALGGHFLESCEEESEEEDELSTDGHSSPGSLWDQDECT). A compositionally biased stretch (acidic residues) spans 201 to 213 (SCEEESEEEDELS).

Belongs to the UPF0524 family.

Functionally, plays a role in neuronal and neurobehavioral development. Required for normal expression of the postmitotic and mature neuron markers elavl3 and eno2 and neurobehaviors related to circadian rhythm and altered light-dark conditions. In Danio rerio (Zebrafish), this protein is UPF0524 protein C3orf70 homolog B.